Reading from the N-terminus, the 79-residue chain is uncharacterized protein (79 aa).

An N-terminal signal peptide occupies residues 1 to 33 (MRLIIRAIVLLALVWIGLLMSGYGILVGSKVNA).

This is an uncharacterized protein from Salmonella typhi.